The sequence spans 2060 residues: Unconventional myosin-X (2060 aa).

The residue at position 1 (M1) is an N-acetylmethionine. The region spanning 63-739 is the Myosin motor domain; the sequence is EGVDDMASLT…LEQKLEKRRE (677 aa). ATP is bound by residues N104, Y113, 160 to 165, and N215; that span reads GAGKTE. The actin-binding stretch occupies residues 619–641; sequence LHSLMATLSSSNPFFVRCIKPNT. IQ domains lie at 742–771, 765–794, and 788–817; these read IDRA…GVVT, VLCG…AAIV, and LKKA…EKRE. Residues 814–882 form an SAH region; sequence EKRELEERKR…LTRELEKQRE (69 aa). Residues 883–933 adopt a coiled-coil conformation; that stretch reads NKQVEEILRLEKEIEDLQRMKEQQELSLTEASLQKLQQLRDEELRRLEDEA. 3 positions are modified to phosphoserine: S961, S964, and S967. Disordered stretches follow at residues 971 to 1039 and 1064 to 1088; these read SELA…PYMN and SLHN…PSPD. Residues 991-1005 show a composition bias toward acidic residues; that stretch reads PEEEVDEGFEADDDA. Residues 1064–1083 show a composition bias toward polar residues; sequence SLHNSSSGESTYCMPQNNGD. Position 1160 is a phosphothreonine (T1160). PH domains are found at residues 1214-1312 and 1394-1499; these read EALK…QVHS and EFIV…NVTD. A MyTH4 domain is found at 1549 to 1697; the sequence is LPYGDINLNL…PSRDEIEALI (149 aa). The FERM domain maps to 1702–2046; that stretch reads MTSTVYCHGG…AYISMIVKKR (345 aa).

Belongs to the TRAFAC class myosin-kinesin ATPase superfamily. Myosin family. Monomer, when in an inactive conformation in the cytosol. Homodimer in its active, membrane-bound conformation; antiparallel coiled coil-mediated dimer formation. Interacts with ECPAS. Interacts with DCC and ITGB5; the presence of DCC inhibits ITGB5 binding. Interacts with tubulin; ITGB5 or DCC binding inhibits tubulin binding. Interacts strongly with CALM3 and weakly with CALM, the CALM3 interaction is essential for function in filopodial extension and motility. Interacts with ITGB1, ITGB3 and ITGB5. Interacts with NEO1. Interacts with VASP.

It localises to the cytoplasm. The protein localises to the cytosol. The protein resides in the cell projection. Its subcellular location is the lamellipodium. It is found in the ruffle. It localises to the cytoskeleton. The protein localises to the filopodium tip. The protein resides in the cell cortex. Its subcellular location is the filopodium membrane. It is found in the cell membrane. Myosins are actin-based motor molecules with ATPase activity. Unconventional myosins serve in intracellular movements. MYO10 binds to actin filaments and actin bundles and functions as a plus end-directed motor. Moves with higher velocity and takes larger steps on actin bundles than on single actin filaments. The tail domain binds to membranous compartments containing phosphatidylinositol 3,4,5-trisphosphate or integrins, and mediates cargo transport along actin filaments. Regulates cell shape, cell spreading and cell adhesion. Stimulates the formation and elongation of filopodia. In hippocampal neurons it induces the formation of dendritic filopodia by trafficking the actin-remodeling protein VASP to the tips of filopodia, where it promotes actin elongation. Plays a role in formation of the podosome belt in osteoclasts. This is Unconventional myosin-X (Myo10) from Rattus norvegicus (Rat).